We begin with the raw amino-acid sequence, 411 residues long: Alpha-1-antiproteinase (411 aa).

Positions Met1–Ala24 are cleaved as a signal peptide. Ser33 bears the Phosphoserine mark. Residues Asn64, Asn101, and Asn265 are each glycosylated (N-linked (GlcNAc...) asparagine). The segment at Gly367 to His386 is RCL. Ser377 is modified (phosphoserine).

It belongs to the serpin family. In terms of assembly, interacts with CELA2A. Interacts with ERGIC3 and LMAN1/ERGIC53. Interacts with PRSS1/Trypsin. As to expression, plasma.

The protein localises to the secreted. Inhibitor of serine proteases. The primary target is elastase, but also has a moderate affinity for plasmin and thrombin. The sequence is that of Alpha-1-antiproteinase (Serpina1) from Rattus norvegicus (Rat).